A 505-amino-acid chain; its full sequence is MEIRAEEISQIIKEQIRGFDKKVELSETGVVLSVGDGIARVYGLEKVMTMELVEFPGGILGLVLNLEEDNVGVAIMGEDTNIKEGDIVKRTGRIAQVPVGEAVLGRVVDTTGAPIDGKGPINASETRRIEVVAPGVIARKSVHEPCYTGLKAVDAMTPVGRGQRELIIGDRQIGKTAVAIDAILAQKDTDVYCIYVACGQKKSSVAQVAAILEKHGAMEYTTIVAACASDPASLQYLAPYAGCSMGEYFRDNGKHALIIYDDLSKQAAAYRQVSLLLRRPPGREAYPGDIFYNHSRLLERAAKLNDELGAGSLTALPIIETQAGDVSAFIPTNVISITDGQIYLEPNLFFAGIRPAINVGLSVSRVGGAAQVKAMKQVAGTLRLDMAQFRELEAFAAFGSDLDAATQRQLTRGARLVEILKQPQYKPLSMEKQVTILFAGTNGHLDELPLDAIAAYEAGLYTFIETKYPQVFADLKEKQAFTDEIKQTLTKALGEYGQEFKDTIK.

169-176 contacts ATP; it reads GDRQIGKT.

Belongs to the ATPase alpha/beta chains family. In terms of assembly, F-type ATPases have 2 components, CF(1) - the catalytic core - and CF(0) - the membrane proton channel. CF(1) has five subunits: alpha(3), beta(3), gamma(1), delta(1), epsilon(1). CF(0) has three main subunits: a(1), b(2) and c(9-12). The alpha and beta chains form an alternating ring which encloses part of the gamma chain. CF(1) is attached to CF(0) by a central stalk formed by the gamma and epsilon chains, while a peripheral stalk is formed by the delta and b chains.

The protein localises to the cell inner membrane. The enzyme catalyses ATP + H2O + 4 H(+)(in) = ADP + phosphate + 5 H(+)(out). Functionally, produces ATP from ADP in the presence of a proton gradient across the membrane. The alpha chain is a regulatory subunit. The polypeptide is ATP synthase subunit alpha (Desulfosudis oleivorans (strain DSM 6200 / JCM 39069 / Hxd3) (Desulfococcus oleovorans)).